Here is a 706-residue protein sequence, read N- to C-terminus: MSTAVAEFKPSEKLLKTRNIGISAHIDSGKTTLTERILFYTNRIHAIHEVRGKDGVGAKMDSMDLERERGITIQSAATYCQWKNHTINIIDTPGHVDFTVEVERSLRVLDSAILVLCGVAGVQSQSITVDRQMRRYNVPRVAFINKLDRTGANPFRVIEQLKEKLKHNAVPVQIPIGLENDLKGVVDLVTMKAYYFEGKDGMDIQEKEIPDDLKELANKKHEELLDAASMFSDELTEALLEGTPTEEMIKKAIRTGTIELKITPVFMGSAFKNKGVQKLLDGVLDYLASPVDVKNKALDQNNNEEMIVLESNYEKPLVCLAFKLEDGRYGQLTYVRVYQGKLSKGMTIYNMSNNKKHNVGRLCRMHSDEMEDIDSAEAGDIIALFGIDCASGDTFTDGKLKVSMESMFVPAPVISLTIEAKESKHLNNLAKALNRFTKEDPTFQTHVDPESGQTIIKGMGELHLEVYIERMKREYGVELITGAPQVAYRETITSKADFDYTHKKQTGGQGQFGRVAGYMEPIPLEETLDYDFVNKVVGGAIPREYIQSVDKGFKSCLERGSLIGFPIIGVRCVINDGAYHDVDSSDMAFQIAGRYAFRQGFNKANPQILEPIMKVEVDGPSEFQGAILGSLNQRRGMILNTTEEDAYCKTEAEVPLADMFGYSTVLRSSTQGKAEFSMEFSRYAPVPRNVAEELMKKYKVNNKDED.

In terms of domain architecture, tr-type G spans 15–291 (LKTRNIGISA…GVLDYLASPV (277 aa)). GTP is bound by residues 24-31 (AHIDSGKT), 91-95 (DTPGH), and 145-148 (NKLD).

It belongs to the TRAFAC class translation factor GTPase superfamily. Classic translation factor GTPase family. EF-G/EF-2 subfamily.

It localises to the cytoplasm. In terms of biological role, catalyzes the GTP-dependent ribosomal translocation step during translation elongation. During this step, the ribosome changes from the pre-translocational (PRE) to the post-translocational (POST) state as the newly formed A-site-bound peptidyl-tRNA and P-site-bound deacylated tRNA move to the P and E sites, respectively. Catalyzes the coordinated movement of the two tRNA molecules, the mRNA and conformational changes in the ribosome. The sequence is that of Elongation factor G from Leptospira borgpetersenii serovar Hardjo-bovis (strain L550).